The primary structure comprises 810 residues: Ecotropic viral integration site 5 protein homolog (810 aa).

The interaction with alpha-tubulin, gamma-tubulin, BIRC5 and FBXO5 stretch occupies residues 1-483 (MVTNKMTAAF…EAESQCALKE (483 aa)). Disordered regions lie at residues 49–80 (VASP…QLSP) and 98–123 (TDSK…SSSA). A compositionally biased stretch (low complexity) spans 51–80 (SPSTSLHTTSSSTTLSTPALSPSSPSQLSP). Phosphoserine is present on residues Ser-102 and Ser-113. Over residues 103–123 (LRSVNGSRRNSGSSLVSSSSA) the composition is skewed to low complexity. The tract at residues 128–693 (SHLEEDSWIL…LNKSDSNQYI (566 aa)) is dimerization. The Rab-GAP TBC domain maps to 163–348 (GIPHHFRAIV…RIFDIFMSEG (186 aa)). A targeting to the centrosomes region spans residues 377 to 810 (QHFQKVIPHQ…RRRESYSTTV (434 aa)). Residues 406–716 (KKMKKLEKEY…LRCLKGQRGF (311 aa)) are a coiled coil. Positions 487 to 810 (KVLDIEKRNN…RRRESYSTTV (324 aa)) are interaction with AURKB and INCENP. Residues Ser-497, Ser-689, Ser-776, and Ser-778 each carry the phosphoserine modification. The segment at 756 to 810 (GFPLHGKSGSMSLDPAVADGSESETEDSVLETRESNQVVQKERPPRRRESYSTTV) is disordered. Residues 785 to 810 (LETRESNQVVQKERPPRRRESYSTTV) show a composition bias toward basic and acidic residues.

In terms of assembly, dimeric and monomeric. Interacts with alpha- and gamma-tubulin. Interacts with FBXO5. Interacts with the chromosome passenger complex (CPC) which is at least composed of AURKB/aurora-B, BIRC5/survivin, CDCA8/borealin and INCENP. Probably phosphorylated by PLK1; may be required for degradation during mitosis. In terms of processing, ubiquitinated. Degradation during prophase is ubiquitin-dependent. As to expression, expressed in various cell lines (at protein level). Expressed in a wide range of tissues including brain and adrenal.

The protein resides in the nucleus. The protein localises to the cytoplasm. Its subcellular location is the cytoskeleton. It localises to the microtubule organizing center. It is found in the centrosome. The protein resides in the spindle. Its function is as follows. Functions as a regulator of cell cycle progression by stabilizing the FBXO5 protein and promoting cyclin-A accumulation during interphase. May play a role in cytokinesis. In Homo sapiens (Human), this protein is Ecotropic viral integration site 5 protein homolog (EVI5).